We begin with the raw amino-acid sequence, 35 residues long: Dolichyl-diphosphooligosaccharide--protein glycosyltransferase subunit 4C (35 aa).

Residues M1–G8 are Lumenal-facing. A helical membrane pass occupies residues F9 to M29. At A30–E35 the chain is on the cytoplasmic side.

The protein belongs to the OST4 family. Component of the oligosaccharyltransferase (OST) complex.

It localises to the endoplasmic reticulum membrane. Subunit of the oligosaccharyl transferase (OST) complex that catalyzes the initial transfer of a defined glycan (Glc(3)Man(9)GlcNAc(2) in eukaryotes) from the lipid carrier dolichol-pyrophosphate to an asparagine residue within an Asn-X-Ser/Thr consensus motif in nascent polypeptide chains, the first step in protein N-glycosylation. N-glycosylation occurs cotranslationally and the complex associates with the Sec61 complex at the channel-forming translocon complex that mediates protein translocation across the endoplasmic reticulum (ER). All subunits are required for a maximal enzyme activity. This chain is Dolichyl-diphosphooligosaccharide--protein glycosyltransferase subunit 4C (OST4C), found in Arabidopsis thaliana (Mouse-ear cress).